The following is a 311-amino-acid chain: Malate dehydrogenase (311 aa).

Residues 7-13 (GAAGGIG) and Asp34 contribute to the NAD(+) site. Residues Arg81 and Arg87 each coordinate substrate. NAD(+)-binding positions include Asn94 and 117–119 (ITN). 2 residues coordinate substrate: Asn119 and Arg153. The active-site Proton acceptor is the His177. Met227 is an NAD(+) binding site.

This sequence belongs to the LDH/MDH superfamily. MDH type 1 family. In terms of assembly, homodimer.

The catalysed reaction is (S)-malate + NAD(+) = oxaloacetate + NADH + H(+). Its function is as follows. Catalyzes the reversible oxidation of malate to oxaloacetate. The protein is Malate dehydrogenase of Shewanella piezotolerans (strain WP3 / JCM 13877).